An 800-amino-acid polypeptide reads, in one-letter code: Protein gfi-3 (800 aa).

Residues 346–366 (ESLQQAQLRNDEICHQMANIE) adopt a coiled-coil conformation. TPR repeat units lie at residues 526–559 (AIGA…YPEE) and 637–670 (IRIH…AENT).

The APC/C complex is probably composed of at least 12 subunits: apc-2, apc-10, apc-11, cdc-26, emb-1, emb-27, emb-30, mat-1, mat-2, mat-3, such-1 and gfi-3. Expressed in gut cells and mature sperm stored in the spermatheca.

Its pathway is protein modification; protein ubiquitination. Its function is as follows. Probable component of the anaphase promoting complex/cyclosome (APC/C), a cell cycle-regulated E3 ubiquitin ligase that controls progression through mitosis and the G1 phase of the cell cycle. The APC/C complex acts by mediating ubiquitination and subsequent degradation of target proteins. Required for the metaphase to anaphase transition in meiosis. This is Protein gfi-3 from Caenorhabditis elegans.